The sequence spans 2603 residues: Squalestatin tetraketide synthase (2603 aa).

The Ketosynthase family 3 (KS3) domain maps to 29-455 (TIPIAIIGMS…GANAHVILES (427 aa)). Residues Cys202, His337, and His377 each act as for beta-ketoacyl synthase activity in the active site. Residues 463-512 (IANGSGRSNGTGNGHNGANGTTNGHNGTNGTTNGHFDATQATNGHYGTDE) are disordered. Residues 469-479 (RSNGTGNGHNG) show a composition bias toward gly residues. The span at 480–497 (ANGTTNGHNGTNGTTNGH) shows a compositional bias: low complexity. The tract at residues 608-931 (VFTGQGAQWF…PYISCLLRGQ (324 aa)) is malonyl-CoA:ACP transacylase (MAT) domain. The interval 1000–1138 (HDLLGSLIVG…GRITIEFDTS (139 aa)) is N-terminal hotdog fold. The PKS/mFAS DH domain maps to 1000–1314 (HDLLGSLIVG…NQSVGQMAPQ (315 aa)). The tract at residues 1000 to 1314 (HDLLGSLIVG…NQSVGQMAPQ (315 aa)) is dehydratase (DH) domain. The active-site Proton acceptor; for dehydratase activity is His1032. The C-terminal hotdog fold stretch occupies residues 1157 to 1314 (LMRSVDPSNL…NQSVGQMAPQ (158 aa)). Asp1223 functions as the Proton donor; for dehydratase activity in the catalytic mechanism. Positions 1465-1665 (LYRYYTDAIK…GLDIELRDCD (201 aa)) are methyltransferase (CMet) domain. Residues 1892-2205 (GLIDTLQFSK…AGKHMGKIVI (314 aa)) form an enoyl reductase (ER) (ER) domain region. The segment at 2228 to 2406 (ASYLIVGGLG…AVSIDLGMVQ (179 aa)) is ketoreductase (KR) domain. The region spanning 2516 to 2593 (EAIDVVGRAI…ALATTVATKS (78 aa)) is the Carrier domain. An O-(pantetheine 4'-phosphoryl)serine modification is found at Ser2553.

It participates in secondary metabolite biosynthesis. Highly reducing polyketide synthase (HR-PKS); part of the gene cluster that mediates the biosynthesis of squalestatin S1 (SQS1, also known as zaragozic acid A), a lead compound for the treatment of hyper-cholesterolemia by targeting squalene synthase (SS). Pks1 is responsible for the biosynthesis of the tetraketide sidechain of SQS1. The biosynthesis must involve 3 rounds of chain extension. After the first and second rounds methyl-transfer occurs, and in all rounds of extension the ketoreductase and dehydratase are active. The enoyl reductase and C-MeT are not active in the final round of extension. The chain is Squalestatin tetraketide synthase from Phoma sp. (strain C2932).